Consider the following 1097-residue polypeptide: DNA-directed RNA polymerase subunit beta (1097 aa).

The tract at residues 1072 to 1097 (QDINPRRNTPSRPTYESLGTSEYEED) is disordered. The segment covering 1077–1091 (RRNTPSRPTYESLGT) has biased composition (polar residues).

This sequence belongs to the RNA polymerase beta chain family. In cyanobacteria the RNAP catalytic core is composed of 2 alpha, 1 beta, 1 beta', 1 gamma and 1 omega subunit. When a sigma factor is associated with the core the holoenzyme is formed, which can initiate transcription.

It catalyses the reaction RNA(n) + a ribonucleoside 5'-triphosphate = RNA(n+1) + diphosphate. Its function is as follows. DNA-dependent RNA polymerase catalyzes the transcription of DNA into RNA using the four ribonucleoside triphosphates as substrates. In Prochlorococcus marinus (strain MIT 9215), this protein is DNA-directed RNA polymerase subunit beta.